The sequence spans 313 residues: Porphobilinogen deaminase (313 aa).

Cysteine 242 is subject to S-(dipyrrolylmethanemethyl)cysteine.

It belongs to the HMBS family. In terms of assembly, monomer. Requires dipyrromethane as cofactor.

The enzyme catalyses 4 porphobilinogen + H2O = hydroxymethylbilane + 4 NH4(+). It functions in the pathway porphyrin-containing compound metabolism; protoporphyrin-IX biosynthesis; coproporphyrinogen-III from 5-aminolevulinate: step 2/4. In terms of biological role, tetrapolymerization of the monopyrrole PBG into the hydroxymethylbilane pre-uroporphyrinogen in several discrete steps. This Salmonella arizonae (strain ATCC BAA-731 / CDC346-86 / RSK2980) protein is Porphobilinogen deaminase.